Reading from the N-terminus, the 297-residue chain is Pyrroline-5-carboxylate reductase 1 (297 aa).

It belongs to the pyrroline-5-carboxylate reductase family.

The protein localises to the cytoplasm. The enzyme catalyses L-proline + NADP(+) = (S)-1-pyrroline-5-carboxylate + NADPH + 2 H(+). It catalyses the reaction L-proline + NAD(+) = (S)-1-pyrroline-5-carboxylate + NADH + 2 H(+). It functions in the pathway amino-acid biosynthesis; L-proline biosynthesis; L-proline from L-glutamate 5-semialdehyde: step 1/1. Catalyzes the reduction of 1-pyrroline-5-carboxylate (PCA) to L-proline. This chain is Pyrroline-5-carboxylate reductase 1 (proH), found in Bacillus spizizenii (strain ATCC 23059 / NRRL B-14472 / W23) (Bacillus subtilis subsp. spizizenii).